The chain runs to 232 residues: Fibrillarin-like rRNA/tRNA 2'-O-methyltransferase (232 aa).

Residues 89 to 90, 108 to 109, 133 to 134, and 153 to 156 each bind S-adenosyl-L-methionine; these read TT, EF, DA, and DIAQ.

It belongs to the methyltransferase superfamily. Fibrillarin family. Interacts with nop5. Component of box C/D small ribonucleoprotein (sRNP) particles that contain rpl7ae, FlpA and nop5, plus a guide RNA. These sRNP particles form homodimers, giving rise to an asymmetric holoenzyme.

Involved in pre-rRNA and tRNA processing. Utilizes the methyl donor S-adenosyl-L-methionine to catalyze the site-specific 2'-hydroxyl methylation of ribose moieties in rRNA and tRNA. Site specificity is provided by a guide RNA that base pairs with the substrate. Methylation occurs at a characteristic distance from the sequence involved in base pairing with the guide RNA. This chain is Fibrillarin-like rRNA/tRNA 2'-O-methyltransferase, found in Saccharolobus solfataricus (strain ATCC 35092 / DSM 1617 / JCM 11322 / P2) (Sulfolobus solfataricus).